A 145-amino-acid chain; its full sequence is MNFKYIVAVSFLIASAYARSVQNDEQSLSQRDVLEEEESLREIRGIGGKILSGLKTALKGAAKELASTYLHRKRTAEEHEVMKRLEAVMRDLDSLDYPEEASERETRGFNQDEIANLFTKKEKRILGPVLGLVGSALGGLIKKIG.

The first 18 residues, 1–18 (MNFKYIVAVSFLIASAYA), serve as a signal peptide directing secretion. 2 consecutive propeptides follow at residues 19–43 (RSVQ…LREI) and 75–122 (TAEE…TKKE). I144 is modified (isoleucine amide).

This sequence belongs to the bombinin family. Expressed by the skin glands.

It localises to the secreted. In terms of biological role, maximin-3 shows antibacterial activity against both Gram-positive and Gram-negative bacteria. It also shows antimicrobial activity against the fungus C.albicans, but not against A.flavus nor P.uticale. It has little hemolytic activity. It possess a significant cytotoxicity against tumor cell lines. It possess a significant anti-HIV activity. It shows high spermicidal activity. Functionally, maximin-H11 shows antimicrobial activity against bacteria and against the fungus C.albicans. Shows strong hemolytic activity. The polypeptide is Maximins 3/H11 type 3 (Bombina maxima (Giant fire-bellied toad)).